We begin with the raw amino-acid sequence, 273 residues long: Endochitinase EP3 (273 aa).

An N-terminal signal peptide occupies residues 1–28 (MLTPTISKSISLVTILLVLQAFSNTTKA). Residue Asn24 is glycosylated (N-linked (GlcNAc...) asparagine). The Chitin-binding type-1 domain occupies 29-63 (QNCGCSSELCCSQFGFCGNTSDYCGVGCQQGPCFA). 4 disulfides stabilise this stretch: Cys31/Cys39, Cys33/Cys45, Cys38/Cys52, and Cys56/Cys61. Residue Asn47 is glycosylated (N-linked (GlcNAc...) asparagine). The interval 70–273 (VSVAEIVTQE…GVDPGNNLTC (204 aa)) is catalytic. Catalysis depends on Glu136, which acts as the Proton donor. N-linked (GlcNAc...) asparagine glycans are attached at residues Asn157 and Asn270.

The protein belongs to the glycosyl hydrolase 19 family. Chitinase class I subfamily. In terms of tissue distribution, expressed in cells surrounding embryos, stems, seedlings, pollen, roots, shoots, inflorescence, flowers, siliques and leaves. Present in seedpods and seed embryos, but not in roots, inflorescence stems, leaves and flowers.

The enzyme catalyses Random endo-hydrolysis of N-acetyl-beta-D-glucosaminide (1-&gt;4)-beta-linkages in chitin and chitodextrins.. Functionally, probably involved in hypersensitive reaction upon Xanthomonas campestris infection. This chain is Endochitinase EP3, found in Arabidopsis thaliana (Mouse-ear cress).